Here is a 639-residue protein sequence, read N- to C-terminus: Threonine--tRNA ligase (639 aa).

The TGS domain maps to 1–61 (MIHITLPDGS…TADCRLSIIT (61 aa)). Residues 242 to 533 (DHRKLGRELD…LLEQHAGALP (292 aa)) form a catalytic region. Zn(2+) is bound by residues cysteine 333, histidine 384, and histidine 510.

Belongs to the class-II aminoacyl-tRNA synthetase family. As to quaternary structure, homodimer. Zn(2+) serves as cofactor.

The protein resides in the cytoplasm. The enzyme catalyses tRNA(Thr) + L-threonine + ATP = L-threonyl-tRNA(Thr) + AMP + diphosphate + H(+). Catalyzes the attachment of threonine to tRNA(Thr) in a two-step reaction: L-threonine is first activated by ATP to form Thr-AMP and then transferred to the acceptor end of tRNA(Thr). Also edits incorrectly charged L-seryl-tRNA(Thr). This is Threonine--tRNA ligase from Verminephrobacter eiseniae (strain EF01-2).